Reading from the N-terminus, the 662-residue chain is Protein-arginine deiminase type-1 (662 aa).

The Ca(2+) site is built by asparagine 153, aspartate 155, aspartate 157, aspartate 164, aspartate 175, aspartate 178, glutamine 350, glutamate 352, lysine 363, aspartate 370, serine 371, asparagine 374, phenylalanine 408, and leucine 411. The active-site Nucleophile is the cysteine 644.

This sequence belongs to the protein arginine deiminase family. Monomer. It depends on Ca(2+) as a cofactor. In terms of tissue distribution, expressed only in the epidermis and uterus.

The protein resides in the cytoplasm. The enzyme catalyses L-arginyl-[protein] + H2O = L-citrullyl-[protein] + NH4(+). Catalyzes the deimination of arginine residues of proteins. The sequence is that of Protein-arginine deiminase type-1 (Padi1) from Mus musculus (Mouse).